The primary structure comprises 146 residues: MKVDIFESSGASRVHSIPFYLQRISAGFPSPAQGYEKQELNLHEYCVRHPSATYFLRVSGSSMEDGRIHDGDVLVVDRSLTASHGSIVVACIHNEFTVKRLLLRPRPCLMPMNKDFPVYYIDPDNESVEIWGVVTHSLIEHPVCLR.

Active-site for autocatalytic cleavage activity residues include serine 62 and lysine 99.

Belongs to the peptidase S24 family.

In terms of biological role, involved in UV protection and mutation. The chain is Protein MucA (mucA) from Escherichia coli.